We begin with the raw amino-acid sequence, 133 residues long: Fatty acid-binding protein homolog 1 (133 aa).

The residue at position 1 (methionine 1) is an N-acetylmethionine. Residues arginine 107 and 127–129 (RTY) each bind hexadecanoate.

Belongs to the calycin superfamily. Fatty-acid binding protein (FABP) family.

Functionally, has been implicated in the acquisition, storage, and transport of lipids, and may be important to the organism since it is incapable of synthesizing most of its lipids de novo. In Echinococcus granulosus (Hydatid tapeworm), this protein is Fatty acid-binding protein homolog 1 (FABP1).